The primary structure comprises 142 residues: Truncated non-functional hemagglutinin-esterase homolog (142 aa).

At 1–117 (MNFTVPVQAI…ESVDVISSSY (117 aa)) the chain is on the virion surface side. A glycan (N-linked (GlcNAc...) asparagine; by host) is linked at N2. C28 and C33 are joined by a disulfide. 2 N-linked (GlcNAc...) asparagine; by host glycosylation sites follow: N46 and N67. Residues C70 and C95 are joined by a disulfide bond. Residues 118 to 138 (FVATWVLLVVVIILVFIIISF) traverse the membrane as a helical segment. Topologically, residues 139-142 (CISN) are intravirion.

The protein belongs to the influenza type C/coronaviruses hemagglutinin-esterase family. As to quaternary structure, homodimer. In terms of processing, N-glycosylated.

It localises to the virion membrane. The protein localises to the host cell membrane. The sequence is that of Truncated non-functional hemagglutinin-esterase homolog (HE) from Berne virus (BEV).